A 150-amino-acid chain; its full sequence is Male-specific protein scotti (150 aa).

The disordered stretch occupies residues 60 to 84 (PPMAVFPARGGPNGGPPRLRKKRSF). A glycan (N-linked (GlcNAc...) asparagine) is linked at Asn131.

It belongs to the male-specific scotti family.

Its function is as follows. Post-meiotically transcribed gene that has a role in late spermiogenesis; required for actin cone progression during spermatid individualization. This chain is Male-specific protein scotti, found in Drosophila yakuba (Fruit fly).